Reading from the N-terminus, the 690-residue chain is Elongation factor G (690 aa).

Residues 8–283 enclose the tr-type G domain; sequence EDYRNFGIMA…AVVDYLPSPV (276 aa). Residues 17 to 24, 81 to 85, and 135 to 138 each bind GTP; these read AHIDAGKT, DTPGH, and NKMD.

This sequence belongs to the TRAFAC class translation factor GTPase superfamily. Classic translation factor GTPase family. EF-G/EF-2 subfamily.

It is found in the cytoplasm. In terms of biological role, catalyzes the GTP-dependent ribosomal translocation step during translation elongation. During this step, the ribosome changes from the pre-translocational (PRE) to the post-translocational (POST) state as the newly formed A-site-bound peptidyl-tRNA and P-site-bound deacylated tRNA move to the P and E sites, respectively. Catalyzes the coordinated movement of the two tRNA molecules, the mRNA and conformational changes in the ribosome. In Rhodopseudomonas palustris (strain BisB18), this protein is Elongation factor G.